Reading from the N-terminus, the 355-residue chain is Phosphoserine aminotransferase (355 aa).

Position 41 (arginine 41) interacts with L-glutamate. Pyridoxal 5'-phosphate contacts are provided by residues 75-76 (AS), tryptophan 99, threonine 147, aspartate 166, and glutamine 189. Lysine 190 bears the N6-(pyridoxal phosphate)lysine mark. Pyridoxal 5'-phosphate is bound at residue 231 to 232 (NT).

Belongs to the class-V pyridoxal-phosphate-dependent aminotransferase family. SerC subfamily. In terms of assembly, homodimer. Pyridoxal 5'-phosphate is required as a cofactor.

The protein resides in the cytoplasm. It catalyses the reaction O-phospho-L-serine + 2-oxoglutarate = 3-phosphooxypyruvate + L-glutamate. It carries out the reaction 4-(phosphooxy)-L-threonine + 2-oxoglutarate = (R)-3-hydroxy-2-oxo-4-phosphooxybutanoate + L-glutamate. It participates in amino-acid biosynthesis; L-serine biosynthesis; L-serine from 3-phospho-D-glycerate: step 2/3. The protein operates within cofactor biosynthesis; pyridoxine 5'-phosphate biosynthesis; pyridoxine 5'-phosphate from D-erythrose 4-phosphate: step 3/5. Functionally, catalyzes the reversible conversion of 3-phosphohydroxypyruvate to phosphoserine and of 3-hydroxy-2-oxo-4-phosphonooxybutanoate to phosphohydroxythreonine. In Parabacteroides distasonis (strain ATCC 8503 / DSM 20701 / CIP 104284 / JCM 5825 / NCTC 11152), this protein is Phosphoserine aminotransferase.